A 954-amino-acid chain; its full sequence is Chromosomal passenger complex protein BIR1 (954 aa).

BIR repeat units lie at residues 20–117 (RLRT…LLIY) and 153–241 (RKFT…YFFQ). 4 residues coordinate Zn(2+): Cys-208, Cys-211, His-228, and Cys-237. The interval 375–419 (NVQLTQSSSPIKKKRKFKRISPRKIFDEEDSEHSLNNNSANGDNK) is disordered. A compositionally biased stretch (basic residues) spans 385-396 (IKKKRKFKRISP). Residues Ser-477, Ser-508, and Ser-552 each carry the phosphoserine modification. Disordered stretches follow at residues 541-645 (DIDR…SGKV) and 661-685 (FSASDFSPSSQSEQSSKSSSVISTP). A compositionally biased stretch (basic and acidic residues) spans 556 to 583 (PKTHELIRDNSEKREAQNGEFRHQKDST). Ser-587 carries the post-translational modification Phosphoserine. Polar residues predominate over residues 593 to 604 (SNKSGDNSSNIT). 2 positions are modified to phosphoserine: Ser-751 and Ser-765. Residues 798 to 839 (LVSGTSSYPRNSRLEEQRKETSTSLADNSKKGSSFNEGNNEK) form a disordered region. Residues 809-818 (SRLEEQRKET) show a composition bias toward basic and acidic residues. Residues 819-835 (STSLADNSKKGSSFNEG) show a composition bias toward polar residues.

As to quaternary structure, component of the CPC complex at least composed of IPL1, BIR1 and SLI15. Interacts with CBF2/NDC10. Interacts with CBF3D/SKP1.

Its function is as follows. Component of the chromosomal passenger complex (CPC), a complex that acts as a key regulator of chromosome segregation and cytokinesis. The sequence is that of Chromosomal passenger complex protein BIR1 (BIR1) from Saccharomyces cerevisiae (strain ATCC 204508 / S288c) (Baker's yeast).